Reading from the N-terminus, the 690-residue chain is Elongation factor G (690 aa).

Residues 8–282 form the tr-type G domain; it reads EKTRNIGIMA…AVVAYMPSPL (275 aa). GTP is bound by residues 17–24, 81–85, and 135–138; these read AHIDAGKT, DTPGH, and NKMD.

It belongs to the TRAFAC class translation factor GTPase superfamily. Classic translation factor GTPase family. EF-G/EF-2 subfamily.

The protein localises to the cytoplasm. Functionally, catalyzes the GTP-dependent ribosomal translocation step during translation elongation. During this step, the ribosome changes from the pre-translocational (PRE) to the post-translocational (POST) state as the newly formed A-site-bound peptidyl-tRNA and P-site-bound deacylated tRNA move to the P and E sites, respectively. Catalyzes the coordinated movement of the two tRNA molecules, the mRNA and conformational changes in the ribosome. The polypeptide is Elongation factor G (Alkaliphilus oremlandii (strain OhILAs) (Clostridium oremlandii (strain OhILAs))).